A 345-amino-acid polypeptide reads, in one-letter code: CCAAT/enhancer-binding protein beta (345 aa).

Residues 1–24 (MQRLVAWDPACLPLPPPPPAFKSM) form a required for Lys-174 sumoylation region. R3 bears the Asymmetric dimethylarginine; by CARM1 mark. Residues 24–135 (MEVANFYYEA…YGGKNCKKPA (112 aa)) are required for MYC transcriptional repression. K43 carries the post-translational modification N6-acetyllysine; alternate. K43 carries the post-translational modification N6-methylated lysine; alternate. Disordered regions lie at residues 46 to 67 (PAAP…GSIG) and 79 to 116 (LEPL…QHHD). A compositionally biased stretch (pro residues) spans 47 to 59 (AAPPAARPGPRPP). Residues 84 to 100 (APQAPAPATATDTFEAA) show a composition bias toward low complexity. The 9aaTAD signature appears at 116–124 (DFLSDLFSD). Residues K129 and K132 each carry the N6-acetyllysine; by KAT2A and KAT2B modification. The residue at position 133 (K133) is an N6-acetyllysine; by KAT2A and KAT2B; alternate. A Glycyl lysine isopeptide (Lys-Gly) (interchain with G-Cter in SUMO2); alternate cross-link involves residue K133. A disordered region spans residues 157-178 (FAPLHPPPPPPPPPAELKAEPG). Over residues 160-171 (LHPPPPPPPPPA) the composition is skewed to pro residues. K174 is covalently cross-linked (Glycyl lysine isopeptide (Lys-Gly) (interchain with G-Cter in SUMO2); alternate). K174 participates in a covalent cross-link: Glycyl lysine isopeptide (Lys-Gly) (interchain with G-Cter in SUMO); alternate. Residues K185 and K187 each participate in a glycyl lysine isopeptide (Lys-Gly) (interchain with G-Cter in SUMO2) cross-link. The segment covering 218–232 (SGSSGSLSTSSSSSP) has biased composition (low complexity). The segment at 218-271 (SGSSGSLSTSSSSSPPGTPSPADAKAPPTACYAGAAPAPSQVKSKAKKTVDKHS) is disordered. A Phosphothreonine; by GSK3-beta modification is found at T226. 2 O-linked (GlcNAc) serine glycosylation sites follow: S227 and S228. Phosphoserine; by GSK3-beta is present on S231. T235 is subject to Phosphothreonine; by RPS6KA1, CDK2 and MAPK. Glycyl lysine isopeptide (Lys-Gly) (interchain with G-Cter in SUMO2) cross-links involve residues K260 and K262. A Phosphothreonine; by RPS6KA1 and PKC/PRKCA modification is found at T266. A bZIP domain is found at 271–334 (SDEYKIRRER…STLRNLFKQL (64 aa)). The segment at 275-295 (KIRRERNNIAVRKSRDKAKMR) is basic motif. S288 carries the phosphoserine; by PKC/PRKCA modification. Positions 297 to 304 (LETQHKVL) are leucine-zipper. Residue S325 is modified to Phosphoserine; by CaMK2. A Glycyl lysine isopeptide (Lys-Gly) (interchain with G-Cter in SUMO2) cross-link involves residue K332.

Belongs to the bZIP family. C/EBP subfamily. As to quaternary structure, binds DNA as a homodimer and as a heterodimer. Interacts with ATF4. Binds DNA as a heterodimer with ATF4. Interacts with MYB; within the complex, MYB and CEBPB bind to different promoter regions. Can form stable heterodimers with CEBPD. Can form stable heterodimers with CEBPA and CEBPE. Interacts with SIX1. Isoform 2 and isoform 3 also form heterodimers. Interacts with TRIM28 and PTGES2. Interacts with PRDM16. Interacts with CCDC85B. Forms a complex with THOC5. Interacts with ZNF638; this interaction increases transcriptional activation. Interacts with CIDEA and CIDEC; these interactions increase transcriptional activation of a subset of CEBPB downstream target genes. Interacts with DDIT3/CHOP. Interacts with EP300; recruits EP300 to chromatin. Interacts with RORA; the interaction disrupts interaction with EP300. Interacts (not methylated) with MED23, MED26, SMARCA2, SMARCB1 and SMARCC1. Interacts with KAT2A and KAT2B. Interacts with ATF5; EP300 is required for ATF5 and CEBPB interaction and DNA binding. Interacts with NFE2L1; the heterodimer represses expression of DSPP during odontoblast differentiation. Post-translationally, methylated. Methylation at Arg-3 by CARM1 and at Lys-43 by EHMT2 inhibit transactivation activity. Methylation is probably inhibited by phosphorylation at Thr-235. Sumoylated by polymeric chains of SUMO2 or SUMO3. Sumoylation at Lys-174 is required for inhibition of T-cells proliferation. In adipocytes, sumoylation at Lys-174 by PIAS1 leads to ubiquitination and subsequent proteasomal degradation. Desumoylated by SENP2, which abolishes ubiquitination and stabilizes protein levels. In terms of processing, ubiquitinated, leading to proteasomal degradation. Post-translationally, phosphorylated at Thr-235 by MAPK and CDK2, serves to prime phosphorylation at Thr-226 and Ser-231 by GSK3B and acquire DNA-binding as well as transactivation activities, required to induce adipogenesis. MAPK and CDK2 act sequentially to maintain Thr-235 in the primed phosphorylated state during mitotical cloning expansion and thereby progression of terminal differentiation. Phosphorylation at Thr-266 enhances transactivation activity. Phosphorylation at Ser-325 in response to calcium increases transactivation activity. Phosphorylated at Thr-235 by RPS6KA1. O-glycosylated, glycosylation at Ser-227 and Ser-228 prevents phosphorylation on Thr-235, Ser-231 and Thr-226 and DNA binding activity which delays the adipocyte differentiation program. In terms of processing, acetylated. Acetylation at Lys-43 is an important and dynamic regulatory event that contributes to its ability to transactivate target genes, including those associated with adipogenesis and adipocyte function. Deacetylation by HDAC1 represses its transactivation activity. Acetylated by KAT2A and KAT2B within a cluster of lysine residues between amino acids 129-133, this acetylation is strongly induced by glucocorticoid treatment and enhances transactivation activity. In terms of tissue distribution, expressed at low levels in the lung, kidney and spleen.

The protein localises to the nucleus. It is found in the cytoplasm. Its function is as follows. Important transcription factor regulating the expression of genes involved in immune and inflammatory responses. Also plays a significant role in adipogenesis, as well as in the gluconeogenic pathway, liver regeneration, and hematopoiesis. The consensus recognition site is 5'-T[TG]NNGNAA[TG]-3'. Its functional capacity is governed by protein interactions and post-translational protein modifications. During early embryogenesis, plays essential and redundant roles with CEBPA. Has a promitotic effect on many cell types such as hepatocytes and adipocytes but has an antiproliferative effect on T-cells by repressing MYC expression, facilitating differentiation along the T-helper 2 lineage. Binds to regulatory regions of several acute-phase and cytokines genes and plays a role in the regulation of acute-phase reaction and inflammation. Also plays a role in intracellular bacteria killing. During adipogenesis, is rapidly expressed and, after activation by phosphorylation, induces CEBPA and PPARG, which turn on the series of adipocyte genes that give rise to the adipocyte phenotype. The delayed transactivation of the CEBPA and PPARG genes by CEBPB appears necessary to allow mitotic clonal expansion and thereby progression of terminal differentiation. Essential for female reproduction because of a critical role in ovarian follicle development. Restricts osteoclastogenesis: together with NFE2L1; represses expression of DSPP during odontoblast differentiation. Functionally, essential for gene expression induction in activated macrophages. Plays a major role in immune responses such as CD4(+) T-cell response, granuloma formation and endotoxin shock. Not essential for intracellular bacteria killing. In terms of biological role, acts as a dominant negative through heterodimerization with isoform 2. Promotes osteoblast differentiation and osteoclastogenesis. The sequence is that of CCAAT/enhancer-binding protein beta from Homo sapiens (Human).